Reading from the N-terminus, the 363-residue chain is Ribosomal RNA large subunit methyltransferase M (363 aa).

S-adenosyl-L-methionine-binding positions include Ser-190, 223 to 226 (CPGG), Asp-242, Asp-262, and Asp-279. The active-site Proton acceptor is Lys-308.

It belongs to the class I-like SAM-binding methyltransferase superfamily. RNA methyltransferase RlmE family. RlmM subfamily. Monomer.

It localises to the cytoplasm. The enzyme catalyses cytidine(2498) in 23S rRNA + S-adenosyl-L-methionine = 2'-O-methylcytidine(2498) in 23S rRNA + S-adenosyl-L-homocysteine + H(+). In terms of biological role, catalyzes the 2'-O-methylation at nucleotide C2498 in 23S rRNA. The sequence is that of Ribosomal RNA large subunit methyltransferase M from Aliivibrio salmonicida (strain LFI1238) (Vibrio salmonicida (strain LFI1238)).